Consider the following 107-residue polypeptide: Thioredoxin 1 (107 aa).

Residues S2 to L107 form the Thioredoxin domain. C32 and C35 form a disulfide bridge.

This sequence belongs to the thioredoxin family.

Functionally, participates in various redox reactions through the reversible oxidation of its active center dithiol to a disulfide and catalyzes dithiol-disulfide exchange reactions. The polypeptide is Thioredoxin 1 (trxA) (Nostoc sp. (strain PCC 7120 / SAG 25.82 / UTEX 2576)).